Reading from the N-terminus, the 651-residue chain is Acetyl-coenzyme A synthetase (651 aa).

CoA is bound by residues 189–192 (RGGK), Thr311, and Asn335. ATP contacts are provided by residues 387-389 (GEP), 411-416 (DTWWQT), Asp500, and Arg515. Ser523 serves as a coordination point for CoA. Arg526 serves as a coordination point for ATP. Mg(2+) contacts are provided by Val537, His539, and Val542. Residue Arg586 participates in CoA binding. Lys611 carries the post-translational modification N6-acetyllysine.

This sequence belongs to the ATP-dependent AMP-binding enzyme family. It depends on Mg(2+) as a cofactor. Acetylated. Deacetylation by the SIR2-homolog deacetylase activates the enzyme.

The enzyme catalyses acetate + ATP + CoA = acetyl-CoA + AMP + diphosphate. Its function is as follows. Catalyzes the conversion of acetate into acetyl-CoA (AcCoA), an essential intermediate at the junction of anabolic and catabolic pathways. AcsA undergoes a two-step reaction. In the first half reaction, AcsA combines acetate with ATP to form acetyl-adenylate (AcAMP) intermediate. In the second half reaction, it can then transfer the acetyl group from AcAMP to the sulfhydryl group of CoA, forming the product AcCoA. The sequence is that of Acetyl-coenzyme A synthetase from Brucella suis (strain ATCC 23445 / NCTC 10510).